The primary structure comprises 437 residues: Ribulose bisphosphate carboxylase-like protein (437 aa).

The active-site Proton acceptor is lysine 176. Mg(2+)-binding residues include lysine 202, aspartate 204, and glutamate 205. Lysine 202 is subject to N6-carboxylysine. The active-site Proton acceptor is histidine 293.

It belongs to the RuBisCO large chain family. Type IV subfamily. As to quaternary structure, homodimer. Mg(2+) serves as cofactor.

May be involved in sulfur metabolism and oxidative stress response. Does not show RuBisCO activity. This chain is Ribulose bisphosphate carboxylase-like protein, found in Archaeoglobus fulgidus (strain ATCC 49558 / DSM 4304 / JCM 9628 / NBRC 100126 / VC-16).